The sequence spans 151 residues: Austinoid biosynthesis clusters protein F (151 aa).

This sequence belongs to the trt14 isomerase family. Homodimer.

It participates in secondary metabolite biosynthesis; terpenoid biosynthesis. Part of the gene cluster B that mediates the biosynthesis of the fungal meroterpenoid acetoxydehydroaustin. The first step of the pathway is the synthesis of 3,5-dimethylorsellinic acid by the polyketide synthase ausA. 3,5-dimethylorsellinic acid is then prenylated by the polyprenyl transferase ausN. Further epoxidation by the FAD-dependent monooxygenase ausM and cyclization by the probable terpene cyclase ausL lead to the formation of protoaustinoid A. Protoaustinoid A is then oxidized to spiro-lactone preaustinoid A3 by the combined action of the FAD-binding monooxygenases ausB and ausC, and the dioxygenase ausE. Acid-catalyzed keto-rearrangement and ring contraction of the tetraketide portion of preaustinoid A3 by ausJ lead to the formation of preaustinoid A4. The aldo-keto reductase ausK, with the help of ausH, is involved in the next step by transforming preaustinoid A4 into isoaustinone which is in turn hydroxylated by the P450 monooxygenase ausI to form austinolide. The cytochrome P450 monooxygenase ausG then modifies austinolide to austinol. Austinol is further acetylated to austin by the O-acetyltransferase ausP, which spontaneously changes to dehydroaustin. The cytochrome P450 monooxygenase then converts dehydroaustin is into 7-dehydrodehydroaustin. The hydroxylation catalyzed by ausR permits the second O-acetyltransferase ausQ to add an additional acetyl group to the molecule, leading to the formation of acetoxydehydroaustin. Due to genetic rearrangements of the clusters and the subsequent loss of some enzymes, the end product of the Penicillium brasilianum austinoid biosynthesis clusters is acetoxydehydroaustin. The sequence is that of Austinoid biosynthesis clusters protein F from Penicillium brasilianum.